The sequence spans 251 residues: Uridylate kinase (251 aa).

11 to 14 is an ATP binding site; sequence KLSG. Residues 19-24 form an involved in allosteric activation by GTP region; the sequence is GNQGFG. Glycine 53 is a binding site for UMP. Residues glycine 54 and arginine 58 each coordinate ATP. Residues aspartate 73 and 134–141 each bind UMP; that span reads TGNPYFTT. Threonine 161, tyrosine 167, and aspartate 170 together coordinate ATP.

Belongs to the UMP kinase family. In terms of assembly, homohexamer.

Its subcellular location is the cytoplasm. The enzyme catalyses UMP + ATP = UDP + ADP. It functions in the pathway pyrimidine metabolism; CTP biosynthesis via de novo pathway; UDP from UMP (UMPK route): step 1/1. Its activity is regulated as follows. Allosterically activated by GTP. Inhibited by UTP. Functionally, catalyzes the reversible phosphorylation of UMP to UDP. The sequence is that of Uridylate kinase from Protochlamydia amoebophila (strain UWE25).